The following is a 293-amino-acid chain: Bis(5'-nucleosyl)-tetraphosphatase, symmetrical (293 aa).

The protein belongs to the Ap4A hydrolase family.

The enzyme catalyses P(1),P(4)-bis(5'-adenosyl) tetraphosphate + H2O = 2 ADP + 2 H(+). In terms of biological role, hydrolyzes diadenosine 5',5'''-P1,P4-tetraphosphate to yield ADP. This is Bis(5'-nucleosyl)-tetraphosphatase, symmetrical from Pseudomonas fluorescens (strain Pf0-1).